Here is a 29-residue protein sequence, read N- to C-terminus: MGYDINXXLAQMXKGGVIMXXXXXXQAVI.

The protein belongs to the PdxS/SNZ family. In the presence of PdxT, forms a dodecamer of heterodimers.

The enzyme catalyses aldehydo-D-ribose 5-phosphate + D-glyceraldehyde 3-phosphate + L-glutamine = pyridoxal 5'-phosphate + L-glutamate + phosphate + 3 H2O + H(+). It functions in the pathway cofactor biosynthesis; pyridoxal 5'-phosphate biosynthesis. In terms of biological role, catalyzes the formation of pyridoxal 5'-phosphate from ribose 5-phosphate (RBP), glyceraldehyde 3-phosphate (G3P) and ammonia. The ammonia is provided by the PdxT subunit. Can also use ribulose 5-phosphate and dihydroxyacetone phosphate as substrates, resulting from enzyme-catalyzed isomerization of RBP and G3P, respectively. The chain is Pyridoxal 5'-phosphate synthase subunit PdxS from Clostridium pasteurianum.